We begin with the raw amino-acid sequence, 446 residues long: ATP synthase subunit b-delta (446 aa).

The interval 1-168 (MSTFIGQLFG…PATADVDYPL (168 aa)) is ATP synthase subunit b. Residues 4-24 (FIGQLFGFAVIVYLVWRFIVP) traverse the membrane as a helical segment. The tract at residues 169–446 (LAKMRSASRR…LAAAEARLPD (278 aa)) is ATP synthase subunit delta.

This sequence in the N-terminal section; belongs to the ATPase B chain family. It in the C-terminal section; belongs to the ATPase delta chain family. F-type ATPases have 2 components, F(1) - the catalytic core - and F(0) - the membrane proton channel. F(1) has five subunits: alpha(3), beta(3), gamma(1), delta(1), epsilon(1). F(0) has three main subunits: a(1), b(2) and c(10-14). The alpha and beta chains form an alternating ring which encloses part of the gamma chain. F(1) is attached to F(0) by a central stalk formed by the gamma and epsilon chains, while a peripheral stalk is formed by the delta and b chains.

The protein localises to the cell membrane. F(1)F(0) ATP synthase produces ATP from ADP in the presence of a proton or sodium gradient. F-type ATPases consist of two structural domains, F(1) containing the extramembraneous catalytic core and F(0) containing the membrane proton channel, linked together by a central stalk and a peripheral stalk. During catalysis, ATP synthesis in the catalytic domain of F(1) is coupled via a rotary mechanism of the central stalk subunits to proton translocation. Its function is as follows. This fusion protein includes a component of the F(0) channel (subunit b) and of the F(1) subunit (subunit delta). Two copies of subunit b and one of delta together form the peripheral 'stator' stalk which links F(1) to F(0). This Mycobacterium bovis (strain ATCC BAA-935 / AF2122/97) protein is ATP synthase subunit b-delta (atpFH).